The following is a 376-amino-acid chain: N-acetyldiaminopimelate deacetylase (376 aa).

The active site involves Asp69. The Proton acceptor role is filled by Glu128.

This sequence belongs to the peptidase M20A family. N-acetyldiaminopimelate deacetylase subfamily.

The enzyme catalyses N-acetyl-(2S,6S)-2,6-diaminopimelate + H2O = (2S,6S)-2,6-diaminopimelate + acetate. It functions in the pathway amino-acid biosynthesis; L-lysine biosynthesis via DAP pathway; LL-2,6-diaminopimelate from (S)-tetrahydrodipicolinate (acetylase route): step 3/3. Its function is as follows. Catalyzes the conversion of N-acetyl-diaminopimelate to diaminopimelate and acetate. This is N-acetyldiaminopimelate deacetylase from Bacillus anthracis (strain A0248).